Consider the following 149-residue polypeptide: D-aminoacyl-tRNA deacylase (149 aa).

A Gly-cisPro motif, important for rejection of L-amino acids motif is present at residues 137-138 (GP).

It belongs to the DTD family. As to quaternary structure, homodimer.

The protein resides in the cytoplasm. It catalyses the reaction glycyl-tRNA(Ala) + H2O = tRNA(Ala) + glycine + H(+). It carries out the reaction a D-aminoacyl-tRNA + H2O = a tRNA + a D-alpha-amino acid + H(+). Functionally, an aminoacyl-tRNA editing enzyme that deacylates mischarged D-aminoacyl-tRNAs. Also deacylates mischarged glycyl-tRNA(Ala), protecting cells against glycine mischarging by AlaRS. Acts via tRNA-based rather than protein-based catalysis; rejects L-amino acids rather than detecting D-amino acids in the active site. By recycling D-aminoacyl-tRNA to D-amino acids and free tRNA molecules, this enzyme counteracts the toxicity associated with the formation of D-aminoacyl-tRNA entities in vivo and helps enforce protein L-homochirality. The sequence is that of D-aminoacyl-tRNA deacylase from Clostridium acetobutylicum (strain ATCC 824 / DSM 792 / JCM 1419 / IAM 19013 / LMG 5710 / NBRC 13948 / NRRL B-527 / VKM B-1787 / 2291 / W).